The chain runs to 61 residues: MAVPKKKTSKSRKNMRRAHDFLTAPSLSVCPQCKSPKMPHRACPSCGTYKGKEVAGAAKQA.

Residues 1–16 (MAVPKKKTSKSRKNMR) show a composition bias toward basic residues. The disordered stretch occupies residues 1-20 (MAVPKKKTSKSRKNMRRAHD).

It belongs to the bacterial ribosomal protein bL32 family.

This is Large ribosomal subunit protein bL32 from Trichlorobacter lovleyi (strain ATCC BAA-1151 / DSM 17278 / SZ) (Geobacter lovleyi).